A 215-amino-acid polypeptide reads, in one-letter code: Large ribosomal subunit protein uL3 (215 aa).

An N5-methylglutamine modification is found at Q156.

This sequence belongs to the universal ribosomal protein uL3 family. Part of the 50S ribosomal subunit. Forms a cluster with proteins L14 and L19. Methylated by PrmB.

One of the primary rRNA binding proteins, it binds directly near the 3'-end of the 23S rRNA, where it nucleates assembly of the 50S subunit. The sequence is that of Large ribosomal subunit protein uL3 from Xylella fastidiosa (strain M23).